The primary structure comprises 137 residues: Small ribosomal subunit protein bS18c (137 aa).

This sequence belongs to the bacterial ribosomal protein bS18 family. Part of the 30S ribosomal subunit.

It is found in the plastid. It localises to the chloroplast. This Chlamydomonas reinhardtii (Chlamydomonas smithii) protein is Small ribosomal subunit protein bS18c (rps18).